The sequence spans 178 residues: CASP-like protein 4D1 (178 aa).

Ala-2 bears the N-acetylalanine mark. Topologically, residues 2-14 (APPPPAPPSVTLR) are cytoplasmic. A helical transmembrane segment spans residues 15–35 (TVLLLLRVLTAAFLLITVVLI). At 36–60 (STNTVTLEISSTSIKLPFNDVYAYR) the chain is on the extracellular side. A helical transmembrane segment spans residues 61–81 (YMLSAAVIGLVYAVVQLFLTI). The Cytoplasmic segment spans residues 82–97 (SQFATGKTHPLTYQFD). Residues 98 to 118 (FYGDKVISYLLATGSAAGFGV) traverse the membrane as a helical segment. Residues 119 to 149 (SKDLKDTYIALIEFDSTDPVDKFFSKGYASA) are Extracellular-facing. A helical membrane pass occupies residues 150–170 (SLLLFAFVSLAVLSVFSSLAL). Over 171–178 (SKRPVPVS) the chain is Cytoplasmic.

Belongs to the Casparian strip membrane proteins (CASP) family. Homodimer and heterodimers. In terms of tissue distribution, expressed in the root epidermis.

The protein resides in the cell membrane. This Arabidopsis thaliana (Mouse-ear cress) protein is CASP-like protein 4D1.